The sequence spans 251 residues: uncharacterized protein (251 aa).

The Response regulatory domain maps to 3 to 118 (KVVICDDERI…QLEHILDILV (116 aa)). Asp-55 is modified (4-aspartylphosphate). The 98-residue stretch at 152–249 (NQILSQIKQH…HMSPSDYNKL (98 aa)) folds into the HTH araC/xylS-type domain. DNA-binding regions (H-T-H motif) lie at residues 169–190 (LDLI…KEHV) and 216–239 (HYEI…KKYL).

Post-translationally, phosphorylated by SE_0166.

The protein localises to the cytoplasm. Its function is as follows. Probable member of the two-component regulatory system SE_0166/SE_0165. This is an uncharacterized protein from Staphylococcus epidermidis (strain ATCC 12228 / FDA PCI 1200).